Consider the following 263-residue polypeptide: Microtubule-associated protein RP/EB family member 1 (263 aa).

A Calponin-homology (CH) domain is found at 14 to 116 (NLSRHDMLAW…FVQWFKKFFD (103 aa)). The region spanning 180 to 250 (KKAAGDDESA…LYATDEGFVI (71 aa)) is the EB1 C-terminal domain.

It belongs to the MAPRE family.

It localises to the cytoplasm. The protein localises to the cytoskeleton. It is found in the microtubule organizing center. Its subcellular location is the centrosome. The protein resides in the golgi apparatus. It localises to the spindle. The protein localises to the spindle pole. In terms of biological role, plus-end tracking protein (+TIP) that binds to the plus-end of microtubules and regulates the dynamics of the microtubule cytoskeleton. Promotes cytoplasmic microtubule nucleation and elongation. Involved in mitotic spindle positioning by stabilizing microtubules and promoting dynamic connection between astral microtubules and the cortex during mitotic chromosome segregation. The chain is Microtubule-associated protein RP/EB family member 1 (MAPRE1) from Coturnix coturnix (Common quail).